Reading from the N-terminus, the 327-residue chain is Methionyl-tRNA formyltransferase (327 aa).

122 to 125 (SLLP) contributes to the (6S)-5,6,7,8-tetrahydrofolate binding site.

Belongs to the Fmt family.

The enzyme catalyses L-methionyl-tRNA(fMet) + (6R)-10-formyltetrahydrofolate = N-formyl-L-methionyl-tRNA(fMet) + (6S)-5,6,7,8-tetrahydrofolate + H(+). In terms of biological role, attaches a formyl group to the free amino group of methionyl-tRNA(fMet). The formyl group appears to play a dual role in the initiator identity of N-formylmethionyl-tRNA by promoting its recognition by IF2 and preventing the misappropriation of this tRNA by the elongation apparatus. The chain is Methionyl-tRNA formyltransferase from Ralstonia nicotianae (strain ATCC BAA-1114 / GMI1000) (Ralstonia solanacearum).